Reading from the N-terminus, the 312-residue chain is Olfactory receptor 2L5 (312 aa).

Topologically, residues 1–24 (MENYNQTSTDFILLGLFPPSKIGL) are extracellular. The N-linked (GlcNAc...) asparagine glycan is linked to N5. Residues 25 to 48 (FLFILFVLIFLMALIGNLSMILLI) form a helical membrane-spanning segment. Residues 49 to 56 (FLDTHLHT) are Cytoplasmic-facing. Residues 57–78 (PMYFLLSQLSLIDLNYISTIVP) form a helical membrane-spanning segment. At 79–99 (KMASDFLYGNKSISFIGCGIQ) the chain is on the extracellular side. C96 and C188 are disulfide-bonded. A helical membrane pass occupies residues 100–119 (SFFFMTFAGAEALLLTSMAY). Residues 120 to 138 (DRYVAICFPLHYPIRMSKR) are Cytoplasmic-facing. The helical transmembrane segment at 139 to 157 (MYVLMITGSWMIGSINSCA) threads the bilayer. Residues 158-194 (HTVYAFRIPYCKSRAINHFFCDVPAMLTLACTDTWVY) lie on the Extracellular side of the membrane. A helical membrane pass occupies residues 195–218 (EYTVFLSSTIFLVFPFTGIACSYG). Residues 219 to 235 (WVLLAVYRMHSAEGRKK) are Cytoplasmic-facing. The helical transmembrane segment at 236-258 (AYSTCSTHLTVVTFYYAPFAYTY) threads the bilayer. Over 259–271 (LCPRSLRSLTEDK) the chain is Extracellular. The helical transmembrane segment at 272–291 (VLAVFYTILTPMLNPIIYSL) threads the bilayer. Residues 292–312 (RNKEVMGALTRVIQNIFSVKM) lie on the Cytoplasmic side of the membrane.

Belongs to the G-protein coupled receptor 1 family.

It localises to the cell membrane. In terms of biological role, odorant receptor. This Homo sapiens (Human) protein is Olfactory receptor 2L5 (OR2L5).